A 130-amino-acid chain; its full sequence is uncharacterized protein (130 aa).

At Met1 the chain carries N-acetylmethionine.

In terms of assembly, homotetramer.

This is an uncharacterized protein from Arabidopsis thaliana (Mouse-ear cress).